The sequence spans 726 residues: Sister chromatid cohesion protein SCC4 (726 aa).

TPR repeat units lie at residues 7–40, 88–121, 132–165, 229–262, 443–477, 531–564, and 572–605; these read AEGL…QISF, FQNY…ASSV, CNFN…ASHI, RLRL…IQQL, PTIL…CIEA, ASIL…AHNH, and AQYL…AKKL. Residues 697-726 are disordered; it reads SVGIEGPSPAPSSSRLVGLDTGKRWGKRRM.

This sequence belongs to the SCC4/mau-2 family. In terms of assembly, interacts with SCC2 to form the cohesin loading complex. Expressed ubiquitously.

It localises to the nucleus. It is found in the cytoplasm. In terms of biological role, essential protein required for cell fate determination during embryogenesis. Involved in sister chromatid cohesion. Forms a complex with SCC2, which is required for the association of the cohesin complex with chromosomes. The polypeptide is Sister chromatid cohesion protein SCC4 (Arabidopsis thaliana (Mouse-ear cress)).